The chain runs to 1887 residues: Fatty acid synthase subunit alpha (1887 aa).

Lys-37 is covalently cross-linked (Glycyl lysine isopeptide (Lys-Gly) (interchain with G-Cter in ubiquitin)). Ser-50 bears the Phosphoserine mark. The disordered stretch occupies residues 96–120 (ELAAKEEPAKEEAPAPTPAASAPAP). Residues 98–108 (AAKEEPAKEEA) show a composition bias toward basic and acidic residues. Residues 145 to 220 (VKASLLLHVL…ETFQDTFSGA (76 aa)) enclose the Carrier domain. Ser-180 carries the post-translational modification O-(pantetheine 4'-phosphoryl)serine. At Ser-523 the chain carries Phosphoserine. The beta-ketoacyl reductase stretch occupies residues 675 to 874 (DKYVLITGAG…CGAIIGWTRG (200 aa)). Position 958 is a phosphoserine (Ser-958). The Ketosynthase family 3 (KS3) domain occupies 1123–1657 (QEVIVEEDLE…QKGGQAIVVH (535 aa)). The For beta-ketoacyl synthase activity role is filled by Cys-1305. Residue Ser-1440 is modified to Phosphoserine. Catalysis depends on for beta-ketoacyl synthase activity residues His-1542 and His-1583. Mg(2+) contacts are provided by Asp-1772, Val-1773, and Glu-1774. Residues 1772–1774 (DVE), Tyr-1798, Ser-1808, 1817–1827 (EAVFKSLGVKS), 1841–1844 (RVNK), and 1871–1873 (ISH) each bind acetyl-CoA. Ser-1872 and His-1873 together coordinate Mg(2+).

It belongs to the thiolase-like superfamily. Fungal fatty acid synthetase subunit alpha family. [Alpha(6)beta(6)] hexamers of two multifunctional subunits (alpha and beta). 4'-phosphopantetheine is transferred from CoA to a specific serine of the Acyl carrier domain by the C-terminal PPT domain. This modification is essential for activity because fatty acids are bound in thioester linkage to the sulfhydryl of the prosthetic group.

The enzyme catalyses acetyl-CoA + n malonyl-CoA + 2n NADPH + 4n H(+) = a long-chain-acyl-CoA + n CoA + n CO2 + 2n NADP(+).. The catalysed reaction is a fatty acyl-[ACP] + malonyl-[ACP] + H(+) = a 3-oxoacyl-[ACP] + holo-[ACP] + CO2. It carries out the reaction a (3R)-hydroxyacyl-[ACP] + NADP(+) = a 3-oxoacyl-[ACP] + NADPH + H(+). Inhibited by cerulenin by covalent binding to active site of the ketoacyl synthase (KS) region. Its function is as follows. Fatty acid synthetase catalyzes the formation of long-chain fatty acids from acetyl-CoA, malonyl-CoA and NADPH. The alpha subunit contains domains for: acyl carrier protein, 3-oxoacyl-[acyl-carrier-protein] reductase, and 3-oxoacyl-[acyl-carrier-protein] synthase. This subunit coordinates the binding of the six beta subunits to the enzyme complex. The chain is Fatty acid synthase subunit alpha (FAS2) from Saccharomyces cerevisiae (strain ATCC 204508 / S288c) (Baker's yeast).